The chain runs to 582 residues: Threonine--tRNA ligase (582 aa).

A catalytic region spans residues 185–478 (DHRKLGKELE…LTEQYGGAFP (294 aa)). Residues Cys-278, His-329, and His-455 each coordinate Zn(2+).

This sequence belongs to the class-II aminoacyl-tRNA synthetase family. In terms of assembly, homodimer. Zn(2+) serves as cofactor.

The protein localises to the cytoplasm. It catalyses the reaction tRNA(Thr) + L-threonine + ATP = L-threonyl-tRNA(Thr) + AMP + diphosphate + H(+). In terms of biological role, catalyzes the attachment of threonine to tRNA(Thr) in a two-step reaction: L-threonine is first activated by ATP to form Thr-AMP and then transferred to the acceptor end of tRNA(Thr). Also edits incorrectly charged L-seryl-tRNA(Thr). This is Threonine--tRNA ligase from Dehalococcoides mccartyi (strain ATCC BAA-2100 / JCM 16839 / KCTC 5957 / BAV1).